Reading from the N-terminus, the 85-residue chain is U1-theraphotoxin-Hs1a (85 aa).

The signal sequence occupies residues 1–22 (MKVTLIAILTCAAVLVLHTTAA). A propeptide spanning residues 23–48 (EELEAESQLMEVGMPDTELAAVDEER) is cleaved from the precursor. Intrachain disulfides connect C52-C66, C56-C77, and C71-C82.

Heterodimer composed of the two variants Ile-58 and Gln-58. In terms of tissue distribution, expressed by the venom gland.

It localises to the secreted. In terms of biological role, lethal neurotoxin that blocks neuromuscular transmission. Acts cooperatively to potentiate the activity of huwentoxin-I. This toxin is active against insects. The chain is U1-theraphotoxin-Hs1a from Cyriopagopus schmidti (Chinese bird spider).